The primary structure comprises 414 residues: tRNA N6-adenosine threonylcarbamoyltransferase, mitochondrial (414 aa).

Residues 1-29 constitute a mitochondrion transit peptide; it reads MLILTKTAGVFFKPSKRKVYEFLRSFNFH. N6-acetyllysine occurs at positions 74 and 140. Residues H147 and H151 each coordinate a divalent metal cation. Residues 169-173 and D202 contribute to the substrate site; that span reads LISGG. N6-acetyllysine is present on K203. Residues G222 and E226 each coordinate substrate. An N6-acetyllysine mark is found at K230, K240, and K299. Residues 329–330 and T357 contribute to the substrate site; that span reads SN. D358 is a binding site for a divalent metal cation.

It belongs to the KAE1 / TsaD family. Monomer. It depends on a divalent metal cation as a cofactor. Widely expressed, with maximum expression in pituitary gland, prostate, rectum and uterus.

It is found in the mitochondrion. It carries out the reaction L-threonylcarbamoyladenylate + adenosine(37) in tRNA = N(6)-L-threonylcarbamoyladenosine(37) in tRNA + AMP + H(+). Required for the formation of a threonylcarbamoyl group on adenosine at position 37 (t(6)A37) in mitochondrial tRNAs that read codons beginning with adenine. Probably involved in the transfer of the threonylcarbamoyl moiety of threonylcarbamoyl-AMP (TC-AMP) to the N6 group of A37. Involved in mitochondrial genome maintenance. In Homo sapiens (Human), this protein is tRNA N6-adenosine threonylcarbamoyltransferase, mitochondrial.